We begin with the raw amino-acid sequence, 70 residues long: Large ribosomal subunit protein uL29 (70 aa).

The protein belongs to the universal ribosomal protein uL29 family.

In Thermosynechococcus vestitus (strain NIES-2133 / IAM M-273 / BP-1), this protein is Large ribosomal subunit protein uL29.